The sequence spans 209 residues: Kynurenine formamidase (209 aa).

Trp-20 is a binding site for substrate. 3 residues coordinate Zn(2+): His-50, His-54, and Asp-56. The Proton donor/acceptor role is filled by His-60. Zn(2+)-binding residues include His-161 and Glu-173.

Belongs to the Cyclase 1 superfamily. KynB family. As to quaternary structure, homodimer. It depends on Zn(2+) as a cofactor.

It catalyses the reaction N-formyl-L-kynurenine + H2O = L-kynurenine + formate + H(+). The protein operates within amino-acid degradation; L-tryptophan degradation via kynurenine pathway; L-kynurenine from L-tryptophan: step 2/2. Its function is as follows. Catalyzes the hydrolysis of N-formyl-L-kynurenine to L-kynurenine, the second step in the kynurenine pathway of tryptophan degradation. The polypeptide is Kynurenine formamidase (Bacillus cereus (strain ATCC 10987 / NRS 248)).